A 520-amino-acid polypeptide reads, in one-letter code: TnpB-like protein L79 (520 aa).

Basic residues predominate over residues 21–47 (GSKTKKKVFVKKKPPDKKPLKKPVKKT). Residues 21-52 (GSKTKKKVFVKKKPPDKKPLKKPVKKTVKTDK) form a disordered region. Zn(2+)-binding residues include C474, C477, C491, and C494.

This sequence in the central section; belongs to the transposase 2 family. In the C-terminal section; belongs to the transposase 35 family.

The chain is TnpB-like protein L79 from Acanthamoeba polyphaga mimivirus (APMV).